Here is a 229-residue protein sequence, read N- to C-terminus: Uracil-DNA glycosylase (229 aa).

Catalysis depends on aspartate 64, which acts as the Proton acceptor.

It belongs to the uracil-DNA glycosylase (UDG) superfamily. UNG family.

It localises to the cytoplasm. It carries out the reaction Hydrolyzes single-stranded DNA or mismatched double-stranded DNA and polynucleotides, releasing free uracil.. Its function is as follows. Excises uracil residues from the DNA which can arise as a result of misincorporation of dUMP residues by DNA polymerase or due to deamination of cytosine. The protein is Uracil-DNA glycosylase of Escherichia fergusonii (strain ATCC 35469 / DSM 13698 / CCUG 18766 / IAM 14443 / JCM 21226 / LMG 7866 / NBRC 102419 / NCTC 12128 / CDC 0568-73).